Here is a 324-residue protein sequence, read N- to C-terminus: MRENFKELPMGVRDYLPGEAALRRYLENLFVELVAKEGFQEVITPSFEYYETLRESSETDLIKFVDRTGELLALRGDMTTPIARVVSTKMKHRELPLKIFYAATVFSGNFSGRNKLREFKQLGIEVFGDITSKLESDLIKLMAVYLRKAKVKNLEISLGHVDILTGLIEEYELFNHFSEIKNALNQKDYVALEGIFERAGKSQRVRESLVDFLQQRGGKAILRKAKKMLSHPKAKKALEELEEVTEYLISEGVRELKLDFSLVRDLNYYTGLVFEAYTPYLGYPLGGGGRYDTLLKKFGWDTPAFGFALGLERIVESIANSIDK.

It belongs to the class-II aminoacyl-tRNA synthetase family. HisZ subfamily. As to quaternary structure, heteromultimer composed of HisG and HisZ subunits.

It is found in the cytoplasm. The protein operates within amino-acid biosynthesis; L-histidine biosynthesis; L-histidine from 5-phospho-alpha-D-ribose 1-diphosphate: step 1/9. Functionally, required for the first step of histidine biosynthesis. May allow the feedback regulation of ATP phosphoribosyltransferase activity by histidine. The sequence is that of ATP phosphoribosyltransferase regulatory subunit from Carboxydothermus hydrogenoformans (strain ATCC BAA-161 / DSM 6008 / Z-2901).